The sequence spans 308 residues: Cyclin-D2-1 (308 aa).

Positions 286–308 (EGLSYDSSSPPPPKRRKRSPPGT) are disordered. The span at 298 to 308 (PKRRKRSPPGT) shows a compositional bias: basic residues.

This sequence belongs to the cyclin family. Cyclin D subfamily.

This is Cyclin-D2-1 (CYCD2-1) from Oryza sativa subsp. japonica (Rice).